Consider the following 692-residue polypeptide: Elongation factor G (692 aa).

The region spanning 8–282 (ENTRNIGIMA…AVIDYLPSPL (275 aa)) is the tr-type G domain. GTP contacts are provided by residues 17-24 (AHIDAGKT), 81-85 (DTPGH), and 135-138 (NKMD).

Belongs to the TRAFAC class translation factor GTPase superfamily. Classic translation factor GTPase family. EF-G/EF-2 subfamily.

It localises to the cytoplasm. Functionally, catalyzes the GTP-dependent ribosomal translocation step during translation elongation. During this step, the ribosome changes from the pre-translocational (PRE) to the post-translocational (POST) state as the newly formed A-site-bound peptidyl-tRNA and P-site-bound deacylated tRNA move to the P and E sites, respectively. Catalyzes the coordinated movement of the two tRNA molecules, the mRNA and conformational changes in the ribosome. The protein is Elongation factor G of Bacillus mycoides (strain KBAB4) (Bacillus weihenstephanensis).